The sequence spans 585 residues: Aspartate--tRNA(Asp/Asn) ligase (585 aa).

Glu-173 contributes to the L-aspartate binding site. Residues Gln-197–Lys-200 are aspartate. Residue Arg-219 coordinates L-aspartate. ATP contacts are provided by residues Arg-219–Glu-221 and Gln-228. Residue His-447 participates in L-aspartate binding. Glu-477 serves as a coordination point for ATP. Arg-484 provides a ligand contact to L-aspartate. Gly-529–Arg-532 contacts ATP.

Belongs to the class-II aminoacyl-tRNA synthetase family. Type 1 subfamily. Homodimer.

The protein resides in the cytoplasm. The enzyme catalyses tRNA(Asx) + L-aspartate + ATP = L-aspartyl-tRNA(Asx) + AMP + diphosphate. Functionally, aspartyl-tRNA synthetase with relaxed tRNA specificity since it is able to aspartylate not only its cognate tRNA(Asp) but also tRNA(Asn). Reaction proceeds in two steps: L-aspartate is first activated by ATP to form Asp-AMP and then transferred to the acceptor end of tRNA(Asp/Asn). This is Aspartate--tRNA(Asp/Asn) ligase from Campylobacter concisus (strain 13826).